The following is a 284-amino-acid chain: Tropomyosin (284 aa).

Positions 1–273 form a coiled coil; that stretch reads MDAIKKKMVA…KEKYKAISDE (273 aa). Residues 110–130 are compositionally biased toward basic and acidic residues; that stretch reads SGKLEEASKAADESERNRKVL. The tract at residues 110-134 is disordered; sequence SGKLEEASKAADESERNRKVLENLN.

Belongs to the tropomyosin family. In terms of assembly, homodimer.

In terms of biological role, tropomyosin, in association with the troponin complex, plays a central role in the calcium dependent regulation of muscle contraction. The polypeptide is Tropomyosin (Perna viridis (Asian green mussel)).